Reading from the N-terminus, the 101-residue chain is Large ribosomal subunit protein bL21 (101 aa).

It belongs to the bacterial ribosomal protein bL21 family. Part of the 50S ribosomal subunit. Contacts protein L20.

Functionally, this protein binds to 23S rRNA in the presence of protein L20. This Corynebacterium glutamicum (strain R) protein is Large ribosomal subunit protein bL21.